The following is an 87-amino-acid chain: UPF0473 protein PTH_1066 (87 aa).

Belongs to the UPF0473 family.

This chain is UPF0473 protein PTH_1066, found in Pelotomaculum thermopropionicum (strain DSM 13744 / JCM 10971 / SI).